The chain runs to 491 residues: Bifunctional protein GlmU (491 aa).

The tract at residues Met-1 to Arg-238 is pyrophosphorylase. Residues Leu-14–Gly-17, Lys-28, Gln-81, Gly-86–Thr-87, Tyr-110–Asp-112, Gly-149, Glu-163, Asn-178, and Asn-236 each bind UDP-N-acetyl-alpha-D-glucosamine. Residue Asp-112 coordinates Mg(2+). Asn-236 lines the Mg(2+) pocket. The interval Ala-239 to Ala-259 is linker. The N-acetyltransferase stretch occupies residues Gly-260–Pro-491. UDP-N-acetyl-alpha-D-glucosamine-binding residues include Arg-341 and Lys-359. The active-site Proton acceptor is His-371. Residues Tyr-374 and Asn-385 each contribute to the UDP-N-acetyl-alpha-D-glucosamine site. Acetyl-CoA contacts are provided by residues Ala-388, Asn-394–Tyr-395, Ser-413, and Ala-431. Residues Ala-460 to Pro-491 form a disordered region.

In the N-terminal section; belongs to the N-acetylglucosamine-1-phosphate uridyltransferase family. It in the C-terminal section; belongs to the transferase hexapeptide repeat family. Homotrimer. It depends on Mg(2+) as a cofactor.

The protein localises to the cytoplasm. The catalysed reaction is alpha-D-glucosamine 1-phosphate + acetyl-CoA = N-acetyl-alpha-D-glucosamine 1-phosphate + CoA + H(+). It catalyses the reaction N-acetyl-alpha-D-glucosamine 1-phosphate + UTP + H(+) = UDP-N-acetyl-alpha-D-glucosamine + diphosphate. It participates in nucleotide-sugar biosynthesis; UDP-N-acetyl-alpha-D-glucosamine biosynthesis; N-acetyl-alpha-D-glucosamine 1-phosphate from alpha-D-glucosamine 6-phosphate (route II): step 2/2. It functions in the pathway nucleotide-sugar biosynthesis; UDP-N-acetyl-alpha-D-glucosamine biosynthesis; UDP-N-acetyl-alpha-D-glucosamine from N-acetyl-alpha-D-glucosamine 1-phosphate: step 1/1. The protein operates within bacterial outer membrane biogenesis; LPS lipid A biosynthesis. In terms of biological role, catalyzes the last two sequential reactions in the de novo biosynthetic pathway for UDP-N-acetylglucosamine (UDP-GlcNAc). The C-terminal domain catalyzes the transfer of acetyl group from acetyl coenzyme A to glucosamine-1-phosphate (GlcN-1-P) to produce N-acetylglucosamine-1-phosphate (GlcNAc-1-P), which is converted into UDP-GlcNAc by the transfer of uridine 5-monophosphate (from uridine 5-triphosphate), a reaction catalyzed by the N-terminal domain. The protein is Bifunctional protein GlmU of Kineococcus radiotolerans (strain ATCC BAA-149 / DSM 14245 / SRS30216).